A 358-amino-acid chain; its full sequence is DnaJ homolog subfamily B member 11 (358 aa).

The N-terminal stretch at 1–22 is a signal peptide; that stretch reads MAPQNLSTFCLLLLYLIGTVIA. The region spanning 25–90 is the J domain; it reads DFYKILGVPR…EKRKQYDTYG (66 aa). At Thr-188 the chain carries Phosphothreonine. N-linked (GlcNAc...) asparagine glycosylation is present at Asn-261.

As to quaternary structure, part of a large chaperone multiprotein complex comprising DNAJB11, HSP90B1, HSPA5, HYOU, PDIA2, PDIA4, PDIA6, PPIB, SDF2L1, UGGT1 and very small amounts of ERP29, but not, or at very low levels, CALR nor CANX. Binds to denatured substrates in an ATP-independent manner. Interacts via the J domain with HSPA5 in an ATP-dependent manner. Contains high-mannose Endo H-sensitive carbohydrates. In terms of processing, cys-169, Cys-171, Cys-193 and Cys-196 form intramolecular disulfide bonds. The preferential partner for each Cys is not known.

It is found in the endoplasmic reticulum lumen. Its function is as follows. As a co-chaperone for HSPA5 it is required for proper folding, trafficking or degradation of proteins. Binds directly to both unfolded proteins that are substrates for ERAD and nascent unfolded peptide chains, but dissociates from the HSPA5-unfolded protein complex before folding is completed. May help recruiting HSPA5 and other chaperones to the substrate. Stimulates HSPA5 ATPase activity. It is necessary for maturation and correct trafficking of PKD1. This Mus musculus (Mouse) protein is DnaJ homolog subfamily B member 11 (Dnajb11).